Consider the following 717-residue polypeptide: Probable cyclic nucleotide-gated ion channel 5 (717 aa).

The Cytoplasmic portion of the chain corresponds to 1-102 (MAGKRENFVR…DKFLLYCNKL (102 aa)). The chain crosses the membrane as a helical span at residues 103–123 (FVASCILSVFVDPFFFYLPVI). Over 124–136 (NAESKCLGIDRKL) the chain is Extracellular. Residues 137–157 (AITASTLRTFIDVFYLAHMAL) form a helical membrane-spanning segment. Topologically, residues 158-190 (QLRTAYIAPSSRVFGRGELVIDPAQIAKRYLQR) are cytoplasmic. A helical transmembrane segment spans residues 191–211 (WFIIDFLSVLPLPQIVVWRFL). Residues 212 to 224 (QSSNGSDVLATKQ) lie on the Extracellular side of the membrane. A helical membrane pass occupies residues 225-245 (ALLFIVLVQYIPRFLRVLPLT). Over 246 to 265 (SELKRTAGVFAETAWAGAAY) the chain is Cytoplasmic. Residues 266–286 (YLLLYMLASHIVGAFWYLLAL) form a helical membrane-spanning segment. The Extracellular segment spans residues 287–391 (ERNDACWQEA…GQGLETSTYP (105 aa)). The chain crosses the membrane as a helical span at residues 392-412 (MEIIFSISLAISGLILFALLI). Residues 413–717 (GNMQTYLQSL…KPPEPDFTAD (305 aa)) are Cytoplasmic-facing. Residues 498–628 (LFKS…TFRF) and glutamate 569 each bind a nucleoside 3',5'-cyclic phosphate. The calmodulin-binding stretch occupies residues 614–629 (FRRLHSRQVQHTFRFY). Residues 634-663 (RTWAACFIQAAWRRYCKRKKMEEAEAEAAA) enclose the IQ domain.

This sequence belongs to the cyclic nucleotide-gated cation channel (TC 1.A.1.5) family. As to quaternary structure, homotetramer or heterotetramer.

It localises to the cell membrane. Its function is as follows. Probable cyclic nucleotide-gated ion channel. This is Probable cyclic nucleotide-gated ion channel 5 (CNGC5) from Arabidopsis thaliana (Mouse-ear cress).